Consider the following 188-residue polypeptide: MRVIASSIRKGNVLEQDGKLYVVLSAENIHPGKGTPVSQIEMRRISDGVKISERYKTTDQVEKVTIEERNYSFLYEDGEGFHFMEPESYDQVQVTKDVVGSAAPYLQEGMVVKLSMHDTTAVAITLPQRATLEVVDTEPVTKGQTASSSYKPAVLSNGVRTQVPPHIGTGTRIVVLTEDGSYVERAKD.

It belongs to the elongation factor P family.

It localises to the cytoplasm. It participates in protein biosynthesis; polypeptide chain elongation. In terms of biological role, involved in peptide bond synthesis. Stimulates efficient translation and peptide-bond synthesis on native or reconstituted 70S ribosomes in vitro. Probably functions indirectly by altering the affinity of the ribosome for aminoacyl-tRNA, thus increasing their reactivity as acceptors for peptidyl transferase. The polypeptide is Elongation factor P (Rhodopseudomonas palustris (strain ATCC BAA-98 / CGA009)).